The following is a 465-amino-acid chain: UDP-N-acetylmuramate--L-alanine ligase (465 aa).

Position 114–120 (114–120 (GTHGKTT)) interacts with ATP.

It belongs to the MurCDEF family.

It is found in the cytoplasm. The enzyme catalyses UDP-N-acetyl-alpha-D-muramate + L-alanine + ATP = UDP-N-acetyl-alpha-D-muramoyl-L-alanine + ADP + phosphate + H(+). It functions in the pathway cell wall biogenesis; peptidoglycan biosynthesis. Its function is as follows. Cell wall formation. This is UDP-N-acetylmuramate--L-alanine ligase from Chlorobium phaeobacteroides (strain BS1).